Reading from the N-terminus, the 328-residue chain is Malate dehydrogenase (328 aa).

11-17 contributes to the NAD(+) binding site; it reads GAAGQIG. Substrate-binding residues include Arg94 and Arg100. NAD(+)-binding positions include Asn107, Gln114, and 131 to 133; that span reads VGN. Substrate contacts are provided by Asn133 and Arg164. His189 (proton acceptor) is an active-site residue.

It belongs to the LDH/MDH superfamily. MDH type 2 family.

It catalyses the reaction (S)-malate + NAD(+) = oxaloacetate + NADH + H(+). In terms of biological role, catalyzes the reversible oxidation of malate to oxaloacetate. The polypeptide is Malate dehydrogenase (Xylella fastidiosa (strain Temecula1 / ATCC 700964)).